The following is a 187-amino-acid chain: Signal peptidase I U (187 aa).

Over 1–16 (MNAKTITLKKKRKIKT) the chain is Cytoplasmic. The chain crosses the membrane as a helical span at residues 17–37 (IVVLSIIMIAALIFTIRLVFY). At 38 to 187 (KPFLIEGSSM…YPFGEMRQAK (150 aa)) the chain is on the extracellular side. Residues Ser46 and Lys88 contribute to the active site.

This sequence belongs to the peptidase S26 family.

It localises to the cell membrane. The enzyme catalyses Cleavage of hydrophobic, N-terminal signal or leader sequences from secreted and periplasmic proteins.. This Bacillus subtilis (strain 168) protein is Signal peptidase I U (sipU).